The sequence spans 65 residues: Adrenergic toxin rho-elapitoxin-Dp1b (65 aa).

Disulfide bonds link Cys3–Cys24, Cys17–Cys42, Cys46–Cys57, and Cys58–Cys63.

Belongs to the three-finger toxin family. Short-chain subfamily. Aminergic toxin sub-subfamily. In terms of tissue distribution, expressed by the venom gland.

It is found in the secreted. In terms of biological role, highly potent on various alpha-adrenoceptors (ADRA) (subnanomolar affinity for ADRA1A). Order of potency is the following: ADRA1A (Ki=0.37 nM) &gt; ADRA1B (Ki=10.47 nM) &gt; ADRA1D (Ki=104.71 nM) &gt; ADRA2C (Ki=165.96 nM). Were also found to reversibly bind to muscarinic acetylcholine receptors (CHRM), but the affinity is much weaker (CHRM1, Ki=1778.28 nM; CHRM4, Ki=4466.84 nM; CHRM2, Ki=17782.79 nM). The sequence is that of Adrenergic toxin rho-elapitoxin-Dp1b from Dendroaspis polylepis polylepis (Black mamba).